The chain runs to 279 residues: NADPH-dependent 7-cyano-7-deazaguanine reductase (279 aa).

86 to 88 (IES) lines the substrate pocket. 88 to 89 (SK) lines the NADPH pocket. C186 (thioimide intermediate) is an active-site residue. D193 serves as the catalytic Proton donor. Residue 225 to 226 (HE) coordinates substrate. 254 to 255 (RG) contributes to the NADPH binding site.

It belongs to the GTP cyclohydrolase I family. QueF type 2 subfamily. As to quaternary structure, homodimer.

The protein localises to the cytoplasm. The catalysed reaction is 7-aminomethyl-7-carbaguanine + 2 NADP(+) = 7-cyano-7-deazaguanine + 2 NADPH + 3 H(+). Its pathway is tRNA modification; tRNA-queuosine biosynthesis. Functionally, catalyzes the NADPH-dependent reduction of 7-cyano-7-deazaguanine (preQ0) to 7-aminomethyl-7-deazaguanine (preQ1). The sequence is that of NADPH-dependent 7-cyano-7-deazaguanine reductase from Chromobacterium violaceum (strain ATCC 12472 / DSM 30191 / JCM 1249 / CCUG 213 / NBRC 12614 / NCIMB 9131 / NCTC 9757 / MK).